A 117-amino-acid polypeptide reads, in one-letter code: Large ribosomal subunit protein bL20c (117 aa).

Belongs to the bacterial ribosomal protein bL20 family.

The protein localises to the plastid. The protein resides in the chloroplast. In terms of biological role, binds directly to 23S ribosomal RNA and is necessary for the in vitro assembly process of the 50S ribosomal subunit. It is not involved in the protein synthesizing functions of that subunit. This is Large ribosomal subunit protein bL20c from Acorus gramineus (Dwarf sweet flag).